Consider the following 376-residue polypeptide: Ribosomal RNA large subunit methyltransferase G (376 aa).

It belongs to the methyltransferase superfamily. RlmG family.

The protein localises to the cytoplasm. It catalyses the reaction guanosine(1835) in 23S rRNA + S-adenosyl-L-methionine = N(2)-methylguanosine(1835) in 23S rRNA + S-adenosyl-L-homocysteine + H(+). Functionally, specifically methylates the guanine in position 1835 (m2G1835) of 23S rRNA. This is Ribosomal RNA large subunit methyltransferase G from Vibrio cholerae serotype O1 (strain ATCC 39541 / Classical Ogawa 395 / O395).